The following is a 66-amino-acid chain: Large ribosomal subunit protein bL33c (66 aa).

It belongs to the bacterial ribosomal protein bL33 family.

It localises to the plastid. Its subcellular location is the chloroplast. The polypeptide is Large ribosomal subunit protein bL33c (Lotus japonicus (Lotus corniculatus var. japonicus)).